We begin with the raw amino-acid sequence, 423 residues long: MSTRNCQGIDSVIKPLDTIPEDKKVRVQRTQSSFDPFEKTSNQVKRVHSENNACINFKSASVGKESPKVRRHSSPSSPTSPKFGKADSYEKLEKLGEGSYATVYKGKSKVNGKLVALKVIRLQEEEGTPFTAIREASLLKGLKHANIVLLHDIIHTKETLTLVFEYVHTDLCQYMDKHPGGLNPENVKLFLFQLLRGLSYIHQGHILHRDLKPQNLLISDTGELKLADFGLARAKSVPSHTYSNEVVTLWYRPPDVLLGSTDYSTCLDMWGVGCIFVEMIQGVAAFPGMKDIQDQLERIFLILGTPNEETWPGVHSLPHFKLERFTQYGPKNLRQAWNKLSYVNHAEDLASKLLQCFPKNRLSAQAALNHDYFSDLPPRLWELSDMSSIFTVPNVKLQPEAGESMRVFGKNNSFSKSLSNSKH.

A disordered region spans residues 62 to 85 (VGKESPKVRRHSSPSSPTSPKFGK). Residues 89 to 373 (YEKLEKLGEG…AQAALNHDYF (285 aa)) form the Protein kinase domain. ATP is bound by residues 95-103 (LGEGSYATV) and Lys118. Catalysis depends on Asp210, which acts as the Proton acceptor.

This sequence belongs to the protein kinase superfamily. CMGC Ser/Thr protein kinase family. CDC2/CDKX subfamily. Interacts with ccny; ccny mediates its recruitment to the plasma membrane and promotes phosphorylation of lrp6.

It is found in the cell membrane. It catalyses the reaction L-seryl-[protein] + ATP = O-phospho-L-seryl-[protein] + ADP + H(+). The catalysed reaction is L-threonyl-[protein] + ATP = O-phospho-L-threonyl-[protein] + ADP + H(+). Serine/threonine-protein kinase involved in the control of the eukaryotic cell cycle, whose activity is controlled by an associated cyclin. Acts as a cell-cycle regulator of Wnt signaling pathway during G2/M phase by mediating the phosphorylation of lrp6, leading to the activation of the Wnt signaling pathway. This is Cyclin-dependent kinase 14 (cdk14) from Xenopus tropicalis (Western clawed frog).